The following is a 228-amino-acid chain: Biopolymer transport protein exbB1 (228 aa).

The next 3 helical transmembrane spans lie at 11–31 (LGLM…LLAE), 116–136 (LTLI…LGLI), and 158–178 (LGVA…AVAG).

Belongs to the ExbB/TolQ family. The accessory proteins ExbB and ExbD seem to form a complex with TonB.

It localises to the cell inner membrane. Functionally, involved in the TonB-dependent energy-dependent transport of various receptor-bound substrates. Protects ExbD from proteolytic degradation and functionally stabilizes TonB. In Vibrio cholerae serotype O1 (strain ATCC 39315 / El Tor Inaba N16961), this protein is Biopolymer transport protein exbB1 (exbB1).